The primary structure comprises 365 residues: 3-isopropylmalate dehydrogenase (365 aa).

78-91 (GKKWNNLPIEKRPE) serves as a coordination point for NAD(+). Substrate-binding residues include Arg-99, Arg-109, Arg-139, and Asp-228. The Mg(2+) site is built by Asp-228, Asp-252, and Asp-256. Residue 286–298 (GSAPDIAGKNIAN) participates in NAD(+) binding.

This sequence belongs to the isocitrate and isopropylmalate dehydrogenases family. LeuB type 1 subfamily. In terms of assembly, homodimer. The cofactor is Mg(2+). Requires Mn(2+) as cofactor.

Its subcellular location is the cytoplasm. It carries out the reaction (2R,3S)-3-isopropylmalate + NAD(+) = 4-methyl-2-oxopentanoate + CO2 + NADH. It functions in the pathway amino-acid biosynthesis; L-leucine biosynthesis; L-leucine from 3-methyl-2-oxobutanoate: step 3/4. Functionally, catalyzes the oxidation of 3-carboxy-2-hydroxy-4-methylpentanoate (3-isopropylmalate) to 3-carboxy-4-methyl-2-oxopentanoate. The product decarboxylates to 4-methyl-2 oxopentanoate. This is 3-isopropylmalate dehydrogenase from Buchnera aphidicola subsp. Macrosiphoniella ludovicianae.